Consider the following 1052-residue polypeptide: Malignant fibrous histiocytoma-amplified sequence 1 (1052 aa).

Ala-2 carries the N-acetylalanine modification. LRR repeat units follow at residues 64–85 (DIEALNLGNNGLEEVPEGLGSA), 88–109 (SLRVLVLRRNRFARLPPAVAEL), 112–133 (HLTELDVSHNRLTALGAEVVSA), 136–157 (ELRKLNLSHNQLPALPAQLGAL), 159–180 (HLEELDVSFNRLAHLPDSLSCL), 182–203 (RLRTLDVDHNQLTAFPRQLLQL), 205–226 (ALEELDVSSNRLRGLPEDISAL), 228–249 (ALKILWLSGAELGTLPAGFCEL), 251–272 (SLESLMLDNNGLQALPAQFSCL), 274–296 (RLKMLNLSSNLFEEFPAALLPLA), 297–318 (GLEELYLSRNQLTSVPSLISGL), 320–341 (RLLTLWLDNNRIRYLPDSIVEL), and 343–364 (GLEELVLQGNQIAVLPDHFGQL). Residues 64-364 (DIEALNLGNN…AVLPDHFGQL (301 aa)) are required for interaction with PJA2. The required for interaction with PPP2R2A stretch occupies residues 64-649 (DIEALNLGNN…DKLLSVAEHR (586 aa)). The region spanning 403–649 (QPAVQPRLKL…DKLLSVAEHR (247 aa)) is the Roc domain. Lys-601 carries the post-translational modification N6-acetyllysine.

As to quaternary structure, interacts with RAF1. Interacts with HSPD1. Interacts with PPP2CA; retains PPP2CA into the cytoplasm and excludes it from the nucleus. Interacts with PPP2R2A; the interaction is direct. Interacts with PJA2. In terms of processing, ubiquitinated. Ubiquitination by PJA2 does not lead MFHAS1 to proteasomal degradation but positively regulates its function in polarization of macrophages. Ubiquitously expressed. Overexpressed in malignant fibrous histiocytomas. Expressed in red blood cells (at protein level).

It localises to the cytoplasm. Functionally, probable GTP-binding protein. Functions in innate immunity and more specifically the inflammatory response as a regulator of the Toll-like receptor TLR2 and TLR4 signaling pathways. Negatively regulates the part of the TLR4 signaling pathway that leads to the activation of the transcription factor AP-1. By retaining the phosphatase complex PP2A into the cytoplasm, prevents the dephosphorylation of the AP-1 subunit JUN which is required for proper activation of the transcription factor. Both inhibits and activates the TLR2-dependent signaling pathway. Positively regulates the TLR2 signaling pathway to activate specifically the downstream p38 and JNK MAP kinases and promote the polarization of macrophages toward the pro-inflammatory M1 phenotype. It may also play a role in the regulation of inflammation induced by high glucose through the PKB/AKT signaling pathway. Also involved in erythrocyte differentiation through activation of the ERK1/ERK2 signaling pathway. The sequence is that of Malignant fibrous histiocytoma-amplified sequence 1 from Homo sapiens (Human).